Reading from the N-terminus, the 567-residue chain is Zinc finger protein 512 (567 aa).

Residues 1–34 are disordered; it reads MSSRLGAVPATPGPTPFKQQRSTRIVGAKNSRTQ. Residues lysine 18 and lysine 84 each participate in a glycyl lysine isopeptide (Lys-Gly) (interchain with G-Cter in SUMO2) cross-link. Residues 87–148 are disordered; that stretch reads AASHVEGPGG…QTRRIRKEPP (62 aa). Residues 119–130 are compositionally biased toward basic residues; that stretch reads KKHKLYGRKQRP. Residues 197-220 form a C2H2-type 1 zinc finger; it reads FTCHHCGKQLRSLAGMKYHVMANH. Residue lysine 227 forms a Glycyl lysine isopeptide (Lys-Gly) (interchain with G-Cter in SUMO2) linkage. The segment at 287 to 310 adopts a C2H2-type 2 zinc-finger fold; that stretch reads LKCHHCGKPYRSKAGLAYHLRSEH. Residue lysine 333 forms a Glycyl lysine isopeptide (Lys-Gly) (interchain with G-Cter in SUMO2) linkage. A C2H2-type 3; atypical zinc finger spans residues 406-430; that stretch reads IQCPNQGCEAVYSSVSGLKAHLGSC. The C2H2-type 3 zinc finger occupies 440-463; that stretch reads YKCLLCQKEFVSESGVKYHINSVH. Positions 485-494 are enriched in basic and acidic residues; sequence KQRQQEEEKR. Residues 485 to 567 are disordered; the sequence is KQRQQEEEKR…PKTNHKRGKK (83 aa). Residues 495–508 are compositionally biased toward basic residues; sequence RQQHRSRRSLRRRQ. Residues 523–544 are compositionally biased toward basic and acidic residues; that stretch reads VGKDQRRNHEELLVATSRKEPE. Residues 556 to 567 are compositionally biased toward basic residues; sequence RSPKTNHKRGKK.

Belongs to the krueppel C2H2-type zinc-finger protein family.

It localises to the nucleus. In terms of biological role, may be involved in transcriptional regulation. This is Zinc finger protein 512 (ZNF512) from Bos taurus (Bovine).